The primary structure comprises 702 residues: Lipase maturation factor 2 (702 aa).

8 helical membrane passes run 10-30, 75-95, 164-184, 226-246, 259-279, 316-336, 363-383, and 398-418; these read LFLQGVAAVYLFAFASLYTQI, AQGLDLLTLLGTVLALGALLL, DLPFWLVRWLLFRLMFASGVV, LSVVATFLIEIAVPPLFFAPI, LLQVLIIITGNYNFFNLLTLV, LLLELTVYGLLAYGTVYYFGL, VTLPTVWLGTASLAWELLVVL, and AGIQLSVLGTATVALFLISLV. Residue N488 is glycosylated (N-linked (GlcNAc...) asparagine). A helical transmembrane segment spans residues 636–656; the sequence is ILLWGLFGAVVAIRVVQTLLA. A disordered region spans residues 660-702; sequence LQSSKQTREEKRKQTSKKDSRAASEQAAANSNSRDSWAPRRKK. Residues 665 to 681 are compositionally biased toward basic and acidic residues; that stretch reads QTREEKRKQTSKKDSRA. Over residues 682-693 the composition is skewed to low complexity; that stretch reads ASEQAAANSNSR.

It belongs to the lipase maturation factor family.

It is found in the endoplasmic reticulum membrane. Functionally, involved in the maturation of specific proteins in the endoplasmic reticulum. May be required for maturation and transport of active lipoprotein lipase (LPL) through the secretory pathway. The polypeptide is Lipase maturation factor 2 (Lmf2) (Mus musculus (Mouse)).